Here is a 1248-residue protein sequence, read N- to C-terminus: Reverse gyrase 1 (1248 aa).

Residues 7 to 44 (IPPSIYLFSCPNCGRSISTYRLLLGSVCNICLEEDKEY) form an RG N-terminal-type zinc finger. Zn(2+)-binding residues include Cys-16, Cys-19, Cys-34, and Cys-37. ATP is bound by residues Gln-92 and 109 to 116 (APPGLGKT). Residues 96–262 (IYRLLSGESF…KKYRENTQKN (167 aa)) form the Helicase ATP-binding domain. The short motif at 219-222 (DDVD) is the DEAD box element. The tract at residues 621–1248 (QKVKTVLLVV…QVYEEINEIR (628 aa)) is topoisomerase I. The Toprim domain maps to 625 to 789 (TVLLVVESPN…NIRRAEFHEV (165 aa)). Residue Glu-631 coordinates Mg(2+). The RG C-terminal-type; atypical zinc-finger motif lies at 706–735 (IKKCENNHQFTDFFESNKCPRCMTTKVRYD). Residues Cys-709, His-713, Cys-724, and Cys-727 each contribute to the Zn(2+) site. Residue Asp-758 participates in Mg(2+) binding. Residues 805–1248 (NVNLVKSQLV…QVYEEINEIR (444 aa)) form the Topo IA-type catalytic domain. Tyr-965 (O-(5'-phospho-DNA)-tyrosine intermediate) is an active-site residue.

In the N-terminal section; belongs to the DEAD box helicase family. DDVD subfamily. The protein in the C-terminal section; belongs to the type IA topoisomerase family. In terms of assembly, monomer. It depends on Zn(2+) as a cofactor. Requires Mg(2+) as cofactor. Post-translationally, the N-terminus is blocked.

The protein localises to the cytoplasm. It carries out the reaction ATP + H2O = ADP + phosphate + H(+). Modifies the topological state of DNA by introducing positive supercoils in an ATP-dependent process. Increases the linking number in steps of +1. Has a DNA-stimulated ATPase activity; closed circular ssDNA stimulates ATPase much better than dsDNA although negative supercoiled, positive supercoiled and relaxed dsDNA all stimulate ATPase activity. All NTPs permit topoisomerization (relaxation) of negatively supercoiled dsDNA without nucleotide hydrolysis. It transiently cleaves a single DNA strand and remains covalently bound to the 5' DNA end. Acts via a tyrosine residue. Reverse gyrase binds and unwinds DNA independently of ATP binding and DNA cleavage. May be involved in rewinding the DNA strands in the regions of the chromosome that have opened up to allow transcription or replication, probably acts via ssDNA regions of the chromosome. This is Reverse gyrase 1 from Sulfolobus acidocaldarius (strain ATCC 33909 / DSM 639 / JCM 8929 / NBRC 15157 / NCIMB 11770).